Consider the following 225-residue polypeptide: Rho GDP-dissociation inhibitor 3 (225 aa).

It belongs to the Rho GDI family. As to expression, detected only in brain, lung, kidney and testis.

Its subcellular location is the cytoplasm. Functionally, inhibits GDP/GTP exchange reaction of RhoB. Interacts specifically with the GDP- and GTP-bound forms of post-translationally processed Rhob and Rhog proteins, both of which show a growth-regulated expression in mammalian cells. Stimulates the release of the GDP-bound but not the GTP-bound RhoB protein. Also inhibits the GDP/GTP exchange of RhoB but shows less ability to inhibit the dissociation of prebound GTP. This Mus musculus (Mouse) protein is Rho GDP-dissociation inhibitor 3 (Arhgdig).